Consider the following 322-residue polypeptide: 4-diphosphocytidyl-2-C-methyl-D-erythritol kinase (322 aa).

The active site involves K25. ATP is bound at residue 110-120 (PVAGGMAGGSA). D152 is an active-site residue.

It belongs to the GHMP kinase family. IspE subfamily.

The catalysed reaction is 4-CDP-2-C-methyl-D-erythritol + ATP = 4-CDP-2-C-methyl-D-erythritol 2-phosphate + ADP + H(+). It functions in the pathway isoprenoid biosynthesis; isopentenyl diphosphate biosynthesis via DXP pathway; isopentenyl diphosphate from 1-deoxy-D-xylulose 5-phosphate: step 3/6. Functionally, catalyzes the phosphorylation of the position 2 hydroxy group of 4-diphosphocytidyl-2C-methyl-D-erythritol. The sequence is that of 4-diphosphocytidyl-2-C-methyl-D-erythritol kinase from Mycolicibacterium vanbaalenii (strain DSM 7251 / JCM 13017 / BCRC 16820 / KCTC 9966 / NRRL B-24157 / PYR-1) (Mycobacterium vanbaalenii).